We begin with the raw amino-acid sequence, 257 residues long: 7-carboxy-7-deazaguanine synthase (257 aa).

Substrate contacts are provided by residues leucine 29–glycine 31 and arginine 44. Residues leucine 35 to aspartate 253 form the Radical SAM core domain. [4Fe-4S] cluster-binding residues include cysteine 48, cysteine 52, and cysteine 55. Serine 57 provides a ligand contact to Mg(2+). Threonine 90 is a binding site for substrate. Position 92 (glycine 92) interacts with S-adenosyl-L-methionine. A disordered region spans residues valine 133–glutamate 153.

It belongs to the radical SAM superfamily. 7-carboxy-7-deazaguanine synthase family. Homodimer. It depends on [4Fe-4S] cluster as a cofactor. S-adenosyl-L-methionine is required as a cofactor. The cofactor is Mg(2+).

It catalyses the reaction 6-carboxy-5,6,7,8-tetrahydropterin + H(+) = 7-carboxy-7-deazaguanine + NH4(+). The protein operates within purine metabolism; 7-cyano-7-deazaguanine biosynthesis. Its function is as follows. Catalyzes the complex heterocyclic radical-mediated conversion of 6-carboxy-5,6,7,8-tetrahydropterin (CPH4) to 7-carboxy-7-deazaguanine (CDG), a step common to the biosynthetic pathways of all 7-deazapurine-containing compounds. The chain is 7-carboxy-7-deazaguanine synthase from Halobacterium salinarum (strain ATCC 29341 / DSM 671 / R1).